Here is a 256-residue protein sequence, read N- to C-terminus: 3-deoxy-manno-octulosonate cytidylyltransferase (256 aa).

The protein belongs to the KdsB family.

It is found in the cytoplasm. It carries out the reaction 3-deoxy-alpha-D-manno-oct-2-ulosonate + CTP = CMP-3-deoxy-beta-D-manno-octulosonate + diphosphate. It participates in nucleotide-sugar biosynthesis; CMP-3-deoxy-D-manno-octulosonate biosynthesis; CMP-3-deoxy-D-manno-octulosonate from 3-deoxy-D-manno-octulosonate and CTP: step 1/1. It functions in the pathway bacterial outer membrane biogenesis; lipopolysaccharide biosynthesis. Functionally, activates KDO (a required 8-carbon sugar) for incorporation into bacterial lipopolysaccharide in Gram-negative bacteria. The chain is 3-deoxy-manno-octulosonate cytidylyltransferase from Histophilus somni (strain 129Pt) (Haemophilus somnus).